A 571-amino-acid polypeptide reads, in one-letter code: Proline--tRNA ligase (571 aa).

This sequence belongs to the class-II aminoacyl-tRNA synthetase family. ProS type 1 subfamily. Homodimer.

It localises to the cytoplasm. It catalyses the reaction tRNA(Pro) + L-proline + ATP = L-prolyl-tRNA(Pro) + AMP + diphosphate. Its function is as follows. Catalyzes the attachment of proline to tRNA(Pro) in a two-step reaction: proline is first activated by ATP to form Pro-AMP and then transferred to the acceptor end of tRNA(Pro). As ProRS can inadvertently accommodate and process non-cognate amino acids such as alanine and cysteine, to avoid such errors it has two additional distinct editing activities against alanine. One activity is designated as 'pretransfer' editing and involves the tRNA(Pro)-independent hydrolysis of activated Ala-AMP. The other activity is designated 'posttransfer' editing and involves deacylation of mischarged Ala-tRNA(Pro). The misacylated Cys-tRNA(Pro) is not edited by ProRS. The chain is Proline--tRNA ligase from Aliivibrio salmonicida (strain LFI1238) (Vibrio salmonicida (strain LFI1238)).